The chain runs to 369 residues: Pulmonary surfactant-associated protein D (369 aa).

The N-terminal stretch at Met-1 to Gly-20 is a signal peptide. S-nitrosocysteine occurs at positions 35 and 40. The disordered stretch occupies residues Ser-41 to Leu-215. A Collagen-like domain is found at Gly-46–Ala-216. Residues Leu-47 to Asp-65 show a composition bias toward basic and acidic residues. At Pro-78 the chain carries 4-hydroxyproline. A 5-hydroxylysine modification is found at Lys-87. An N-linked (GlcNAc...) asparagine glycan is attached at Asn-90. Residue Pro-96 is modified to 4-hydroxyproline. Lys-99 is modified (5-hydroxylysine). Gly residues predominate over residues Gly-139 to Gly-148. Residues Pro-165 and Pro-171 each carry the 4-hydroxyproline modification. The segment covering Pro-165 to Ala-191 has biased composition (low complexity). Positions Lys-198 to Lys-210 are enriched in basic and acidic residues. A coiled-coil region spans residues Glu-217–Phe-248. Residues Val-254–Phe-369 form the C-type lectin domain. Cystine bridges form between Cys-275–Cys-367 and Cys-345–Cys-359.

The protein belongs to the SFTPD family. In terms of assembly, oligomeric complex of 4 set of homotrimers. Post-translationally, hydroxylation on proline residues within the sequence motif, GXPG, is most likely to be 4-hydroxy as this fits the requirement for 4-hydroxylation in vertebrates. In terms of processing, S-nitrosylation at Cys-35 and Cys-40 alters the quaternary structure which results in a pro-inflammatory chemoattractive signaling activity with macrophages.

It is found in the secreted. It localises to the extracellular space. The protein resides in the extracellular matrix. Its subcellular location is the surface film. Contributes to the lung's defense against inhaled microorganisms, organic antigens and toxins. Interacts with compounds such as bacterial lipopolysaccharides, oligosaccharides and fatty acids and modulates leukocyte action in immune response. May participate in the extracellular reorganization or turnover of pulmonary surfactant. Binds strongly maltose residues and to a lesser extent other alpha-glucosyl moieties. The polypeptide is Pulmonary surfactant-associated protein D (SFTPD) (Bos taurus (Bovine)).